Reading from the N-terminus, the 629-residue chain is tRNA uridine 5-carboxymethylaminomethyl modification enzyme MnmG (629 aa).

FAD is bound by residues 15–20, V127, and S182; that span reads GAGHAG. The interval 203 to 226 is disordered; that stretch reads TPPRVKSSTIDYSKTEEQPGDDHP. The span at 215-226 shows a compositional bias: basic and acidic residues; it reads SKTEEQPGDDHP. 274–288 contributes to the NAD(+) binding site; that stretch reads GARYCPSIEDKIVRF. Q371 contributes to the FAD binding site.

This sequence belongs to the MnmG family. In terms of assembly, homodimer. Heterotetramer of two MnmE and two MnmG subunits. The cofactor is FAD.

Its subcellular location is the cytoplasm. NAD-binding protein involved in the addition of a carboxymethylaminomethyl (cmnm) group at the wobble position (U34) of certain tRNAs, forming tRNA-cmnm(5)s(2)U34. This chain is tRNA uridine 5-carboxymethylaminomethyl modification enzyme MnmG, found in Listeria monocytogenes serovar 1/2a (strain ATCC BAA-679 / EGD-e).